Consider the following 484-residue polypeptide: Allantoinase, mitochondrial (484 aa).

Histidine 76, histidine 78, lysine 163, histidine 199, histidine 251, and aspartate 324 together coordinate Zn(2+). Position 163 is an N6-carboxylysine (lysine 163).

This sequence belongs to the metallo-dependent hydrolases superfamily. Allantoinase family. As to quaternary structure, homotetramer. Zn(2+) is required as a cofactor. In terms of processing, carboxylation allows a single lysine to coordinate two zinc ions. Liver and kidney.

The protein localises to the mitochondrion. The enzyme catalyses (S)-allantoin + H2O = allantoate + H(+). The protein operates within nitrogen metabolism; (S)-allantoin degradation; allantoate from (S)-allantoin: step 1/1. The polypeptide is Allantoinase, mitochondrial (ALN) (Aquarana catesbeiana (American bullfrog)).